Here is a 367-residue protein sequence, read N- to C-terminus: Pantothenate kinase CAB1 (367 aa).

The protein belongs to the type II pantothenate kinase family.

The protein localises to the cytoplasm. The protein resides in the nucleus. The enzyme catalyses (R)-pantothenate + ATP = (R)-4'-phosphopantothenate + ADP + H(+). The protein operates within cofactor biosynthesis; coenzyme A biosynthesis; CoA from (R)-pantothenate: step 1/5. Regulated by feedback inhibition by malonyl-CoA. Functionally, plays a role in the physiological regulation of the intracellular CoA concentration. The chain is Pantothenate kinase CAB1 (CAB1) from Saccharomyces cerevisiae (strain ATCC 204508 / S288c) (Baker's yeast).